Consider the following 322-residue polypeptide: Atrochrysone carboxyl ACP thioesterase dmxR1 (322 aa).

4 residues coordinate Zn(2+): H105, H107, D109, and H110. Catalysis depends on D109, which acts as the Proton donor/acceptor.

Belongs to the metallo-beta-lactamase superfamily. It depends on Zn(2+) as a cofactor.

It carries out the reaction atrochrysone carboxyl-[ACP] + H2O = atrochrysone carboxylate + holo-[ACP] + H(+). The protein operates within secondary metabolite biosynthesis. Atrochrysone carboxyl ACP thioesterase; part of the gene cluster that mediates the biosynthesis of the dimeric xanthones cryptosporioptides. The pathway begins with the synthesis of atrochrysone thioester by the polyketide synthase dmx-nrPKS. The atrochrysone carboxyl ACP thioesterase dmxR1 then breaks the thioester bond and releases the atrochrysone carboxylic acid from dmx-nrPKS. Atrochrysone carboxylic acid is decarboxylated by the decarboxylase dmxR15, and oxidized by the anthrone oxygenase dmxR16 to yield emodin. Emodin is then reduced to emodin hydroquinone by the oxidoreductase dmxR7. A-ring reduction by the short chain dehydrogenase dmxR18, dehydration by the scytalone dehydratase-like protein dmxR17 and probable spontaneous re-oxidation, results in overall deoxygenation to chrysophanol. Baeyer-Villiger oxidation by the Baeyer-Villiger monooxygenase (BVMO) dmxR6 then yields monodictylactone in equilibrium with monodictyphenone. In the case of the cryptosporioptides biosynthesis, monodictylactone is reduced at C-12 to an alcohol (by the short chain dehydrogenases dmxR12 or dmxR8) and hydroxylated at C-5 by dmxR9, yielding the electron-rich aromatic which could eliminate H(2)O to form the ortho-quinonemethide, followed by tautomerisation to paraquinone and complete the formal reduction to produce the 10-methylgroup. Conjugate addition of C-4a-OH to the resulting paraquinone by the monooxygenase dmxR10 then gives cyclohexadienone, which is then reduced at C-5 by the short chain dehydrogenase dmxR3 to give the dihydroxanthone. The 6,7-epoxide in the cryptosporioptides could be introduced by the cytochrome P450 monooxygenase dmxL3. The highly reducing PKS dmxL2 manufactures butyrate, which is further carboxylated by dmxL1 to form ethylmalonate. It is not yet clear whether the carboxylation occurs while the butyrate is attached to the ACP of dmxL2, but this unusual fungal metabolite could then be esterified to O-5 by the O-acetyltransferase dmxR13. Finally, dimerization performed by dmxR5 gives the observed dimers cryptosporioptides A, B and C as the final products of the pathway. The sequence is that of Atrochrysone carboxyl ACP thioesterase dmxR1 from Cryptosporiopsis sp. (strain 8999).